The following is a 258-amino-acid chain: Shikimate dehydrogenase (NADP(+)) (258 aa).

Shikimate-binding positions include 14 to 16 (SES) and Thr-61. Catalysis depends on Lys-65, which acts as the Proton acceptor. Positions 86 and 101 each coordinate shikimate. NADP(+) contacts are provided by residues 125 to 129 (GSGGS) and Leu-211. Tyr-213 provides a ligand contact to shikimate. Gly-234 provides a ligand contact to NADP(+).

It belongs to the shikimate dehydrogenase family. In terms of assembly, homodimer.

It catalyses the reaction shikimate + NADP(+) = 3-dehydroshikimate + NADPH + H(+). It functions in the pathway metabolic intermediate biosynthesis; chorismate biosynthesis; chorismate from D-erythrose 4-phosphate and phosphoenolpyruvate: step 4/7. In terms of biological role, involved in the biosynthesis of the chorismate, which leads to the biosynthesis of aromatic amino acids. Catalyzes the reversible NADPH linked reduction of 3-dehydroshikimate (DHSA) to yield shikimate (SA). This chain is Shikimate dehydrogenase (NADP(+)), found in Clostridium botulinum (strain Loch Maree / Type A3).